Here is a 273-residue protein sequence, read N- to C-terminus: DnaJ homolog subfamily C member 27 (273 aa).

Residues 23–30, 71–75, and 134–137 each bind GTP; these read GNAEVGKS, DMAGH, and NKID. The J domain occupies 217–273; that stretch reads DSWDMLGVKPGATRDEVNKAYRKLAVLLHPDKCVAPGSEDAFKAVVNARTALLKNIK.

The protein belongs to the small GTPase superfamily. Rab family.

It localises to the nucleus. GTPase possibly involved in regulation of the MEK/ERK pathway. The polypeptide is DnaJ homolog subfamily C member 27 (DNAJC27) (Gallus gallus (Chicken)).